The following is a 146-amino-acid chain: Large ribosomal subunit protein uL15 (146 aa).

Positions 1-58 (MRLHELHPAPGSRPRATRVGRGIGSGLGKTSGRGHKGQKARSGGGVRRGFEGGQMPLT) are disordered. Positions 21–31 (RGIGSGLGKTS) are enriched in gly residues.

The protein belongs to the universal ribosomal protein uL15 family. In terms of assembly, part of the 50S ribosomal subunit.

Its function is as follows. Binds to the 23S rRNA. The chain is Large ribosomal subunit protein uL15 from Moorella thermoacetica (strain ATCC 39073 / JCM 9320).